The primary structure comprises 299 residues: Probable lipid kinase YegS-like (299 aa).

Residues 1–129 form the DAGKc domain; sequence MSERKALLIL…IDLGEVGGQM (129 aa). Residues Thr-39, 65–71, and Thr-92 contribute to the ATP site; that span reads GDGTLRD. Mg(2+)-binding residues include Leu-210, Asp-213, and Leu-215. The Proton acceptor role is filled by Glu-268.

It belongs to the diacylglycerol/lipid kinase family. YegS lipid kinase subfamily. It depends on Mg(2+) as a cofactor. Ca(2+) is required as a cofactor.

The protein localises to the cytoplasm. Its function is as follows. Probably phosphorylates lipids; the in vivo substrate is unknown. This is Probable lipid kinase YegS-like from Pseudomonas fluorescens (strain ATCC BAA-477 / NRRL B-23932 / Pf-5).